The following is an 85-amino-acid chain: Large ribosomal subunit protein bL27 (85 aa).

Residues 1–20 (MATKKAGGSTKNGRDSNPKM) are disordered.

This sequence belongs to the bacterial ribosomal protein bL27 family.

The chain is Large ribosomal subunit protein bL27 from Acinetobacter baumannii (strain AB307-0294).